Here is a 510-residue protein sequence, read N- to C-terminus: NEDD8-activating enzyme E1 regulatory subunit (510 aa).

At Ala2 the chain carries N-acetylalanine. N6-acetyllysine occurs at positions 6 and 317. The segment at 307–320 (DMIADSGKYIKLQN) is interaction with UBA3.

Belongs to the ubiquitin-activating E1 family. ULA1 subfamily. Heterodimer of UBA3 and NAE1. The complex binds NEDD8 and UBE2M. Binds APP and TP53BP2. In terms of processing, ubiquitinated by TRIP12, leading to its degradation by the proteasome.

It localises to the cell membrane. Its pathway is protein modification; protein neddylation. Its activity is regulated as follows. Binding of TP53BP2 to the regulatory subunit NAE1 decreases neddylation activity. In terms of biological role, regulatory subunit of the dimeric UBA3-NAE1 E1 enzyme. E1 activates NEDD8 by first adenylating its C-terminal glycine residue with ATP, thereafter linking this residue to the side chain of the catalytic cysteine, yielding a NEDD8-UBA3 thioester and free AMP. E1 finally transfers NEDD8 to the catalytic cysteine of UBE2M. Necessary for cell cycle progression through the S-M checkpoint. Overexpression of NAE1 causes apoptosis through deregulation of NEDD8 conjugation. The covalent attachment of NEDD8 to target proteins is known as 'neddylation' and the process is involved in the regulation of cell growth, viability and development. The sequence is that of NEDD8-activating enzyme E1 regulatory subunit (NAE1) from Macaca fascicularis (Crab-eating macaque).